The primary structure comprises 406 residues: Nicotinate phosphoribosyltransferase (406 aa).

The residue at position 225 (His225) is a Phosphohistidine; by autocatalysis.

This sequence belongs to the NAPRTase family. In terms of processing, transiently phosphorylated on a His residue during the reaction cycle. Phosphorylation strongly increases the affinity for substrates and increases the rate of nicotinate D-ribonucleotide production. Dephosphorylation regenerates the low-affinity form of the enzyme, leading to product release.

The catalysed reaction is nicotinate + 5-phospho-alpha-D-ribose 1-diphosphate + ATP + H2O = nicotinate beta-D-ribonucleotide + ADP + phosphate + diphosphate. The protein operates within cofactor biosynthesis; NAD(+) biosynthesis; nicotinate D-ribonucleotide from nicotinate: step 1/1. Its function is as follows. Catalyzes the synthesis of beta-nicotinate D-ribonucleotide from nicotinate and 5-phospho-D-ribose 1-phosphate at the expense of ATP. The sequence is that of Nicotinate phosphoribosyltransferase from Psychromonas ingrahamii (strain DSM 17664 / CCUG 51855 / 37).